The sequence spans 336 residues: Ribosomal RNA large subunit methyltransferase F (336 aa).

The disordered stretch occupies residues 1-24; it reads MPRPTSPHPDAERKSASPLHPRNR.

The protein belongs to the methyltransferase superfamily. METTL16/RlmF family.

The protein localises to the cytoplasm. It catalyses the reaction adenosine(1618) in 23S rRNA + S-adenosyl-L-methionine = N(6)-methyladenosine(1618) in 23S rRNA + S-adenosyl-L-homocysteine + H(+). Specifically methylates the adenine in position 1618 of 23S rRNA. This is Ribosomal RNA large subunit methyltransferase F from Pseudomonas aeruginosa (strain LESB58).